The following is a 276-amino-acid chain: Integrin-binding sialoprotein (276 aa).

A signal peptide spans 1–16 (MRSALLLACLLATASA). Residues 54–251 (HRYKGSDSSE…EEPARGDSYR (198 aa)) are disordered. Positions 61 to 75 (SSEEEGDGSEEEEEG) are enriched in acidic residues. The segment covering 106-119 (QDCKGGQKGTRGDS) has biased composition (basic and acidic residues). Positions 116–118 (RGD) match the Cell attachment site motif. The segment covering 120-144 (GDEDSDEEEEEEEEEEEEEEVEEQD) has biased composition (acidic residues). Positions 145–165 (VSVNGTSTNTTAETPHGNNTV) are enriched in polar residues. Residues N148, N153, and N162 are each glycosylated (N-linked (GlcNAc...) asparagine). Over residues 167–188 (AEEEEDDDEEEEEEEEEEEEAE) the composition is skewed to acidic residues. Residues 189-200 (ATTAAATTAQDE) are compositionally biased toward low complexity. The Cell attachment site motif lies at 228–230 (RGD). Positions 246–248 (RGD) match the Integrin-binding motif motif. Sulfotyrosine is present on residues Y272 and Y273.

In terms of assembly, monomer. Interacts with integrins; the interaction promotes cell adhesion. Phosphorylated on serine and threonine residues.

The protein resides in the secreted. Its function is as follows. Binds tightly to hydroxyapatite. Appears to form an integral part of the mineralized matrix. Probably important to cell-matrix interaction. Promotes adhesion and migration of various cells via the alpha-V/beta-3 integrin receptor (ITGAV:ITGB3). This Gallus gallus (Chicken) protein is Integrin-binding sialoprotein (IBSP).